A 142-amino-acid polypeptide reads, in one-letter code: Large ribosomal subunit protein uL13 (142 aa).

Belongs to the universal ribosomal protein uL13 family. As to quaternary structure, part of the 50S ribosomal subunit.

In terms of biological role, this protein is one of the early assembly proteins of the 50S ribosomal subunit, although it is not seen to bind rRNA by itself. It is important during the early stages of 50S assembly. The chain is Large ribosomal subunit protein uL13 from Pseudoalteromonas atlantica (strain T6c / ATCC BAA-1087).